The sequence spans 222 residues: Flagellin B5 (222 aa).

Positions 1-4 (MRRG) are excised as a propeptide.

Belongs to the archaeal flagellin family.

It localises to the archaeal flagellum. Functionally, flagellin is the subunit protein which polymerizes to form the filaments of archaeal flagella. The chain is Flagellin B5 (flaB5) from Pyrococcus abyssi (strain GE5 / Orsay).